The sequence spans 287 residues: Cell wall-binding protein YocH (287 aa).

The first 25 residues, 1–25, serve as a signal peptide directing secretion; the sequence is MKKTIMSFVAVAALSTTAFGAHASA. 2 LysM domains span residues 26–69 and 78–121; these read KEIT…KLTI and GQYT…TLSV. Residues 130–143 are compositionally biased toward low complexity; sequence TATENAQTNAPQAA. The interval 130-193 is disordered; that stretch reads TATENAQTNA…SNTNNQEASK (64 aa). Positions 165–181 are enriched in basic and acidic residues; sequence QETKAEAETSVNTEEKA. The segment covering 182–193 has biased composition (polar residues); sequence VQSNTNNQEASK.

It is found in the secreted. The protein localises to the cell wall. The protein is Cell wall-binding protein YocH (yocH) of Bacillus subtilis (strain 168).